The following is a 746-amino-acid chain: Protein psiN (746 aa).

Positions 1–23 (MGNINKKLFYFLIQLITILIVLS) are cleaved as a signal peptide. Over 24–679 (DDSYNSLLPL…KCQSAAVKAA (656 aa)) the chain is Extracellular. N97 and N124 each carry an N-linked (GlcNAc...) asparagine glycan. The 152-residue stretch at 125 to 276 (VTSDDPRIYS…YDYCGVCEGM (152 aa)) folds into the PA14 domain. 7 N-linked (GlcNAc...) asparagine glycosylation sites follow: N319, N353, N380, N477, N553, N628, and N654. A helical membrane pass occupies residues 680–700 (VGVGAGAAAGIAIGGAIALGL). The Cytoplasmic segment spans residues 701-746 (AAFGGKRGYDAWKSSRDNQIQTSSENPLYNPNPNQGDNPLYAANNS). The disordered stretch occupies residues 714–746 (SSRDNQIQTSSENPLYNPNPNQGDNPLYAANNS). A compositionally biased stretch (polar residues) spans 717–746 (DNQIQTSSENPLYNPNPNQGDNPLYAANNS).

Belongs to the prespore-cell-inducing factor family.

Its subcellular location is the membrane. The sequence is that of Protein psiN (psiN) from Dictyostelium discoideum (Social amoeba).